A 148-amino-acid chain; its full sequence is Lysozyme C (148 aa).

A signal peptide spans 1–18; the sequence is MKALLLLGLLLLSVTVQG. Positions 19-148 constitute a C-type lysozyme domain; sequence KIFERCDLAR…VSQYVRNCGV (130 aa). Disulfide bonds link C24-C146, C48-C134, C83-C99, and C95-C113. Residues E53 and D71 contribute to the active site.

This sequence belongs to the glycosyl hydrolase 22 family. In terms of assembly, monomer.

It carries out the reaction Hydrolysis of (1-&gt;4)-beta-linkages between N-acetylmuramic acid and N-acetyl-D-glucosamine residues in a peptidoglycan and between N-acetyl-D-glucosamine residues in chitodextrins.. Lysozymes have primarily a bacteriolytic function; those in tissues and body fluids are associated with the monocyte-macrophage system and enhance the activity of immunoagents. In Halichoerus grypus (Gray seal), this protein is Lysozyme C (LYZ).